Here is a 2325-residue protein sequence, read N- to C-terminus: Protein Ycf2 (2325 aa).

Disordered regions lie at residues 168–189 (SSQLKGSSDQSRDHFDSIGTED), 221–251 (TEIESDRFSKGLSGSSSKSRLFTEGEKEMNN), and 947–1006 (KRKK…KRKE). Over residues 230–240 (KGLSGSSSKSR) the composition is skewed to low complexity. 2 stretches are compositionally biased toward basic and acidic residues: residues 241-250 (LFTEGEKEMN) and 955-1004 (KRKE…PEKR). An ATP-binding site is contributed by 1436–1443 (GSIGSGRS). 3 disordered regions span residues 1510–1529 (YEDRDSDDYDEPGASDDYEP), 1855–1996 (LVGS…LLRP), and 2063–2179 (PAEE…DGFS). Positions 1861–1976 (TEEEVEGTEE…VEGTEDEEGE (116 aa)) are enriched in acidic residues. Residues 1977–1989 (GTEKDSSQFDNDR) are compositionally biased toward basic and acidic residues. 2 stretches are compositionally biased toward acidic residues: residues 2063-2080 (PAEEIPEEEDPLPEEALE) and 2087-2162 (GEEE…ENDS).

It belongs to the Ycf2 family.

Its subcellular location is the plastid. The protein localises to the chloroplast stroma. Probable ATPase of unknown function. Its presence in a non-photosynthetic plant (Epifagus virginiana) and experiments in tobacco indicate that it has an essential function which is probably not related to photosynthesis. This Oenothera biennis (German evening primrose) protein is Protein Ycf2.